Reading from the N-terminus, the 875-residue chain is Alanine--tRNA ligase (875 aa).

His-564, His-568, Cys-666, and His-670 together coordinate Zn(2+).

Belongs to the class-II aminoacyl-tRNA synthetase family. Homotetramer. Zn(2+) is required as a cofactor.

It localises to the cytoplasm. It catalyses the reaction tRNA(Ala) + L-alanine + ATP = L-alanyl-tRNA(Ala) + AMP + diphosphate. Its function is as follows. Catalyzes the attachment of alanine to tRNA(Ala) in a two-step reaction: alanine is first activated by ATP to form Ala-AMP and then transferred to the acceptor end of tRNA(Ala). Also edits incorrectly charged Ser-tRNA(Ala) and Gly-tRNA(Ala) via its editing domain. This chain is Alanine--tRNA ligase, found in Citrobacter koseri (strain ATCC BAA-895 / CDC 4225-83 / SGSC4696).